The chain runs to 576 residues: MNIFNQLKQDIIVASRQLYNNQEIANTATIEIPKDSFNGDLSSNIAMIIAAKESIAPREVALKFKEVLITLPYIASIEIAGPGFINFTIKADSWQASIKDILQHEEKFFEIDIDKSKNINIEYVSANPTGPMHIGHARGAIYGDVLARILQKVSYSVTKEYYVNDAGSQINDLVSTVLLRYKEALGEQITIPAGLYPGEYLIPLGQILAKEYGNKLLTMNYAERFKIIKSFAVEKMLDLNRKDLADLGIKHDIFFSEQSLHDKGEIEETVKLLERMGLIYEGTLPAPKGKIHEEWDNRVQKLFKSTKYGDSQDRPIEKADGSWSYFASDLAYAKDKIERGANHLIYVLGADHSGYVKRIEAIVKALGKEQVKVDVKICQLVNFVENGVPVKMSKRLGSFASVQDVNHEVGKDIIRFMMLTRQNDKPLDFDLVKVKEQSRENPIFYVQYAHVRTISILSKAKELMPESYNNFESGKYDLSLLSSEEEIEIIKLLASWTKTLEASAKYFEPHRIAFYLINLASKFHSMWNFGKENSDYRFVIESNKELTLARLALASAIQKVIASGLEVIGVEPMNKM.

A 'HIGH' region motif is present at residues 126–136; that stretch reads ANPTGPMHIGH.

It belongs to the class-I aminoacyl-tRNA synthetase family. Monomer.

The protein resides in the cytoplasm. It catalyses the reaction tRNA(Arg) + L-arginine + ATP = L-arginyl-tRNA(Arg) + AMP + diphosphate. This Rickettsia africae (strain ESF-5) protein is Arginine--tRNA ligase.